Consider the following 512-residue polypeptide: NAD(P) transhydrogenase subunit alpha (512 aa).

At Met1–Val400 the chain is on the cytoplasmic side. NAD(+)-binding positions include Gln125–Asp128, Val175, Asp195–Arg197, and Gly225. The segment at Ser375 to Lys394 is disordered. Transmembrane regions (helical) follow at residues Lys401–Ala421 and Ala422–Trp442. Topologically, residues Asn443–Pro451 are cytoplasmic. The chain crosses the membrane as a helical span at residues Leu452–Arg472. At Gln473 to Leu478 the chain is on the periplasmic side. A helical transmembrane segment spans residues Phe479–Phe499. Residues Arg500–Gly512 lie on the Cytoplasmic side of the membrane.

This sequence belongs to the AlaDH/PNT family. In terms of assembly, heterodimer of an alpha (PntA) and a beta (PntB) chain.

It is found in the cell inner membrane. It catalyses the reaction NAD(+) + NADPH + H(+)(in) = NADH + NADP(+) + H(+)(out). In terms of biological role, the transhydrogenation between NADH and NADP is coupled to respiration and ATP hydrolysis and functions as a proton pump across the membrane. This is NAD(P) transhydrogenase subunit alpha (pntA) from Haemophilus influenzae (strain ATCC 51907 / DSM 11121 / KW20 / Rd).